Consider the following 839-residue polypeptide: Taste receptor type 1 member 2 (839 aa).

Positions 1–19 (MRPRATTICSLFFLLRVLA) are cleaved as a signal peptide. Residues 20 to 566 (EPAKNSDFYL…AFLEWHEAPT (547 aa)) are Extracellular-facing. Residues N84, N127, N248, N292, N312, N368, N428, N487, and N527 are each glycosylated (N-linked (GlcNAc...) asparagine). A helical transmembrane segment spans residues 567 to 587 (IVVALLAALGFLSTLAILVIF). The Cytoplasmic segment spans residues 588–602 (WRHFQTPMVRSAGGP). The chain crosses the membrane as a helical span at residues 603–623 (MCFLMLTLLLVAYMVVPVYVG). The Extracellular segment spans residues 624 to 635 (PPKVSTCFCRQA). The helical transmembrane segment at 636–656 (LFPLCFTICISCIAVRSFQIV) threads the bilayer. At 657 to 681 (CVFKMASRFPRAYSYWVRYQGPYVS) the chain is on the cytoplasmic side. A helical membrane pass occupies residues 682-702 (MAFITVLKMVTVVIGMLATGL). Topologically, residues 703–727 (NPTTRIDPDDPKIMIVSCNPNYRNS) are extracellular. The chain crosses the membrane as a helical span at residues 728 to 748 (LFFNTGLDLLLSVVGFSFAYM). At 749 to 760 (GKELPTNYNEAK) the chain is on the cytoplasmic side. A helical membrane pass occupies residues 761–781 (FITLSMTFYFTSSVSLCTFMS). Over 782–784 (AYN) the chain is Extracellular. The helical transmembrane segment at 785–805 (GVLVTIMDLLVTVLNLLAISL) threads the bilayer. The Cytoplasmic segment spans residues 806–839 (GYFGPKCYMILFYPERNTPAYFNSMIQGYTMRRD).

It belongs to the G-protein coupled receptor 3 family. TAS1R subfamily. As to quaternary structure, forms heterodimers with TAS1R3.

It localises to the cell membrane. Putative taste receptor. TAS1R2/TAS1R3 recognizes diverse natural and synthetic sweeteners. This Macaca mulatta (Rhesus macaque) protein is Taste receptor type 1 member 2 (TAS1R2).